Here is a 257-residue protein sequence, read N- to C-terminus: Thiazole synthase (257 aa).

Residue K99 is the Schiff-base intermediate with DXP of the active site. 1-deoxy-D-xylulose 5-phosphate is bound by residues G160, 186–187 (AG), and 208–209 (NT).

It belongs to the ThiG family. As to quaternary structure, homotetramer. Forms heterodimers with either ThiH or ThiS.

The protein resides in the cytoplasm. The catalysed reaction is [ThiS sulfur-carrier protein]-C-terminal-Gly-aminoethanethioate + 2-iminoacetate + 1-deoxy-D-xylulose 5-phosphate = [ThiS sulfur-carrier protein]-C-terminal Gly-Gly + 2-[(2R,5Z)-2-carboxy-4-methylthiazol-5(2H)-ylidene]ethyl phosphate + 2 H2O + H(+). It participates in cofactor biosynthesis; thiamine diphosphate biosynthesis. Functionally, catalyzes the rearrangement of 1-deoxy-D-xylulose 5-phosphate (DXP) to produce the thiazole phosphate moiety of thiamine. Sulfur is provided by the thiocarboxylate moiety of the carrier protein ThiS. In vitro, sulfur can be provided by H(2)S. The sequence is that of Thiazole synthase from Thermodesulfovibrio yellowstonii (strain ATCC 51303 / DSM 11347 / YP87).